We begin with the raw amino-acid sequence, 115 residues long: T cell receptor beta variable 11-1 (115 aa).

Residues 1 to 21 (MSTRLLCWMALCLLGAELSEA) form the signal peptide. An Ig-like domain is found at 22-115 (EVAQSPRYKI…SAMYLCASSL (94 aa)). Cys-42 and Cys-111 are joined by a disulfide.

In terms of assembly, alpha-beta TR is a heterodimer composed of an alpha and beta chain; disulfide-linked. The alpha-beta TR is associated with the transmembrane signaling CD3 coreceptor proteins to form the TR-CD3 (TcR or TCR). The assembly of alpha-beta TR heterodimers with CD3 occurs in the endoplasmic reticulum where a single alpha-beta TR heterodimer associates with one CD3D-CD3E heterodimer, one CD3G-CD3E heterodimer and one CD247 homodimer forming a stable octameric structure. CD3D-CD3E and CD3G-CD3E heterodimers preferentially associate with TR alpha and TR beta chains, respectively. The association of the CD247 homodimer is the last step of TcR assembly in the endoplasmic reticulum and is required for transport to the cell surface.

Its subcellular location is the cell membrane. V region of the variable domain of T cell receptor (TR) beta chain that participates in the antigen recognition. Alpha-beta T cell receptors are antigen specific receptors which are essential to the immune response and are present on the cell surface of T lymphocytes. Recognize peptide-major histocompatibility (MH) (pMH) complexes that are displayed by antigen presenting cells (APC), a prerequisite for efficient T cell adaptive immunity against pathogens. Binding of alpha-beta TR to pMH complex initiates TR-CD3 clustering on the cell surface and intracellular activation of LCK that phosphorylates the ITAM motifs of CD3G, CD3D, CD3E and CD247 enabling the recruitment of ZAP70. In turn ZAP70 phosphorylates LAT, which recruits numerous signaling molecules to form the LAT signalosome. The LAT signalosome propagates signal branching to three major signaling pathways, the calcium, the mitogen-activated protein kinase (MAPK) kinase and the nuclear factor NF-kappa-B (NF-kB) pathways, leading to the mobilization of transcription factors that are critical for gene expression and essential for T cell growth and differentiation. The T cell repertoire is generated in the thymus, by V-(D)-J rearrangement. This repertoire is then shaped by intrathymic selection events to generate a peripheral T cell pool of self-MH restricted, non-autoaggressive T cells. Post-thymic interaction of alpha-beta TR with the pMH complexes shapes TR structural and functional avidity. This chain is T cell receptor beta variable 11-1, found in Homo sapiens (Human).